The following is a 246-amino-acid chain: Probable transcriptional regulatory protein COSY_0365 (246 aa).

It belongs to the TACO1 family.

Its subcellular location is the cytoplasm. The polypeptide is Probable transcriptional regulatory protein COSY_0365 (Vesicomyosocius okutanii subsp. Calyptogena okutanii (strain HA)).